The chain runs to 422 residues: MPRSFLVKSKKAHSYHQPRSPGPDYSLRLENVLAPGGADGTSSAGGAQTEPRGRLSPESQLTEAPDRSSASPGSCEGSVCDRSSEFEDFWRPPSPSVSPASEKSVCPSLDEAQPFPLPFKPYSWRGLAGSDLRHLVHSYRPCAALDRGAGLGLFCERAPEPGHPAALYGPERAAGGAGAGAPGGGSAGGGAAGGSGLGLYGDFGPAAAGLYERPTAAAGGLYSERGHGLHADKGAGVKVESELLCTRLLLGGGSYKCIKCSKVFSTPHGLEVHVRRSHSGTRPFACEMCGKTFGHAVSLEQHKAVHSQERSFDCKICGKSFKRSSTLSTHLLIHSDTRPYPCQYCGKRFHQKSDMKKHTFIHTGEKPHKCQVCGKAFSQSSNLITHSRKHTGFKPFGCDLCGKGFQRKVDLRRHRETQHGLK.

Positions Met1–Ser20 are SNAG domain. The tract at residues Met1–Pro107 is disordered. Ser20 carries the phosphoserine modification. Residues Ala34–Ala47 show a composition bias toward low complexity. Ser56 carries the post-translational modification Phosphoserine. Polar residues predominate over residues Pro57 to Pro72. The interval Arg140–Cys257 is required for interaction with RELA. C2H2-type zinc fingers lie at residues Tyr255 to His278, Phe284 to His306, Phe312 to His334, Tyr340 to His362, His368 to His390, and Phe396 to His419.

Interacts with U2AF1L4. Component of RCOR-GFI-KDM1A-HDAC complexes. Interacts directly with RCOR1, KDM1A and HDAC2. Also interacts with HDAC1 and HDAC3. Interacts (via the zinc-finger domain) with ARIH2; the interaction prevents GFI1 ubiquitination and proteasomal degradation. Interacts with PIAS3; the interaction relieves the inhibitory effect of PIAS3 on STAT3-mediated transcriptional activity. Forms a complex with EHMT2 and HDAC1 to promote 'Lys-9' dimethylation of H3 (H3K9Me2) and repress expression of target genes. Interacts directly with EHMT2. Component of the GFI1-AJUBA-HDAC1 repressor complex. Interacts directly with AJUBA (via ITS LIM domains); the interaction results in the HDAC-dependent corepression of a subset of GFI1 target genes and, occurs independently of the SNAG domain. Interacts with SPI1; the interaction inhibits SPI1 transcriptional activity targeted at macrophage-specific genes, repressing macrophage differentiation of myeloid progenitor cells and promoting granulocyte commitment. Interacts with RUNX1T1; the interaction represses HDAC-mediated transcriptional activity. Interacts with RELA; the interaction occurs on liposaccharide (LPS) stimulation and controls RELA DNA binding activity and regulates endotoxin-mediated TOLL-like receptor inflammatory response. Interacts (via the C-terminal zinc fingers) with ZBTB17; the interaction results in the recruitment of GFI1 to the CDKN1A/p21 and CDKNIB promoters and repression of transcription. In terms of processing, ubiquitinated.

The protein resides in the nucleus. Functionally, transcription repressor essential for hematopoiesis. Functions in a cell-context and development-specific manner. Binds to 5'-TAAATCAC[AT]GCA-3' in the promoter region of a large number of genes. Component of several complexes, including the EHMT2-GFI1-HDAC1, AJUBA-GFI1-HDAC1 and RCOR-GFI-KDM1A-HDAC complexes, that suppress, via histone deacetylase (HDAC) recruitment, a number of genes implicated in multilineage blood cell development. Regulates neutrophil differentiation, promotes proliferation of lymphoid cells, and is required for granulocyte development. Inhibits SPI1 transcriptional activity at macrophage-specific genes, repressing macrophage differentiation of myeloid progenitor cells and promoting granulocyte commitment. Mediates, together with U2AF1L4, the alternative splicing of CD45 and controls T-cell receptor signaling. Regulates the endotoxin-mediated Toll-like receptor (TLR) inflammatory response by antagonizing RELA. Cooperates with CBFA2T2 to regulate ITGB1-dependent neurite growth. Controls cell-cycle progression by repressing CDKNIA/p21 transcription in response to TGFB1 via recruitment of GFI1 by ZBTB17 to the CDKNIA/p21 and CDKNIB promoters. Required for the maintenance of inner ear hair cells. In addition to its role in transcription, acts as a substrate adapter for PRMT1 in the DNA damage response: facilitates the recognition of TP53BP1 and MRE11 substrates by PRMT1, promoting their methylation and the DNA damage response. The chain is Zinc finger protein Gfi-1 (GFI1) from Canis lupus familiaris (Dog).